The sequence spans 652 residues: MHPGGGPSRAERLELGLGRERPAKAIFLHRRPGEGGGRERCLRCGHVCVRRGPGPREAVPSGRPRPDTLTPPWVRQRAVTGTFCASWTPLRNRRAQRMATDMQRKRSSECLDGTLTPSDGQSMERAESPTPGMAQGMEPGAGQEGAMFVHARSYEDLTESEDGAASGDSHKEGTRGPPPLPTDMRQISQDFSELSTQLTGVARDLQEEMLPGSSEDWLEPPGAVGRPATEPPREGTTEGDEEDATEAWRLHQKHVFVLSEAGKPVYSRYGSEEALSSTMGVMVALVSFLEADKNAIRSIHADGYKVVFVRRSPLVLVAVARTRQSAQELAQELLYIYYQILSLLTGAQLSHIFQQKQNYDLRRLLSGSERITDNLLQLMARDPSFLMGAARCLPLAAAVRDTVSASLQQARARSLVFSILLARNQLVALVRRKDQFLHPIDLHLLFNLISSSSSFREGEAWTPVCLPKFNAAGFFHAHISYLEPDTDLCLLLVSTDREDFFAVSDCRRRFQERLRKRGAHLALREALRTPYYSVAQVGIPDLRHFLYKSKSSGLFTSPEIEAPYTSEEEQERLLGLYQYLHSRAHNASRPLKTIYYTGPNENLLAWVTGAFELYMCYSPLGTKASAVSAIHKLMRWIRKEEDRLFILTPLTY.

The tract at residues 102–141 is disordered; it reads MQRKRSSECLDGTLTPSDGQSMERAESPTPGMAQGMEPGA. 2 positions are modified to phosphoserine: Ser128 and Ser153. Thr158 carries the post-translational modification Phosphothreonine. The disordered stretch occupies residues 158-185; the sequence is TESEDGAASGDSHKEGTRGPPPLPTDMR. The residue at position 188 (Ser188) is a Phosphoserine. Positions 211–245 are disordered; that stretch reads PGSSEDWLEPPGAVGRPATEPPREGTTEGDEEDAT.

The protein belongs to the MON1/SAND family. In terms of assembly, interacts with CCZ1. Found in a complex with RMC1, CCZ1, MON1A and MON1B. The MON1A-CCZ1B complex interacts with RIMOC1. The MON1A-CCZ1B complex interacts with RAB7A and this interaction is enhanced in the presence of RIMOC1.

Plays an important role in membrane trafficking through the secretory apparatus. Not involved in endocytic trafficking to lysosomes. Acts in concert with CCZ1, as a guanine exchange factor (GEF) for RAB7, promotes the exchange of GDP to GTP, converting it from an inactive GDP-bound form into an active GTP-bound form. In Homo sapiens (Human), this protein is Vacuolar fusion protein MON1 homolog A (MON1A).